The following is a 218-amino-acid chain: LexA repressor (218 aa).

The segment at residues 28–48 is a DNA-binding region (H-T-H motif); it reads RAEIAAEFGFSSPNAAEEHLR. Catalysis depends on for autocatalytic cleavage activity residues Ser136 and Lys173.

Belongs to the peptidase S24 family. As to quaternary structure, homodimer.

The enzyme catalyses Hydrolysis of Ala-|-Gly bond in repressor LexA.. Functionally, represses a number of genes involved in the response to DNA damage (SOS response), including recA and lexA. In the presence of single-stranded DNA, RecA interacts with LexA causing an autocatalytic cleavage which disrupts the DNA-binding part of LexA, leading to derepression of the SOS regulon and eventually DNA repair. In Cupriavidus pinatubonensis (strain JMP 134 / LMG 1197) (Cupriavidus necator (strain JMP 134)), this protein is LexA repressor.